Reading from the N-terminus, the 309-residue chain is tRNA uridine(34) hydroxylase (309 aa).

The region spanning 130–224 (SDPDTIVIDT…YLEEVPQEES (95 aa)) is the Rhodanese domain. C184 functions as the Cysteine persulfide intermediate in the catalytic mechanism.

Belongs to the TrhO family.

It catalyses the reaction uridine(34) in tRNA + AH2 + O2 = 5-hydroxyuridine(34) in tRNA + A + H2O. Catalyzes oxygen-dependent 5-hydroxyuridine (ho5U) modification at position 34 in tRNAs. The protein is tRNA uridine(34) hydroxylase of Rhizobium johnstonii (strain DSM 114642 / LMG 32736 / 3841) (Rhizobium leguminosarum bv. viciae).